A 514-amino-acid chain; its full sequence is Peptide chain release factor 3 (514 aa).

The region spanning 8–268 (KKRRTFAIIS…TFLEFAPEPH (261 aa)) is the tr-type G domain. Residues 17 to 24 (SHPDAGKT), 85 to 89 (DTPGH), and 139 to 142 (NKLD) contribute to the GTP site.

This sequence belongs to the TRAFAC class translation factor GTPase superfamily. Classic translation factor GTPase family. PrfC subfamily.

The protein resides in the cytoplasm. Functionally, increases the formation of ribosomal termination complexes and stimulates activities of RF-1 and RF-2. It binds guanine nucleotides and has strong preference for UGA stop codons. It may interact directly with the ribosome. The stimulation of RF-1 and RF-2 is significantly reduced by GTP and GDP, but not by GMP. This Streptococcus pyogenes serotype M2 (strain MGAS10270) protein is Peptide chain release factor 3.